A 1131-amino-acid polypeptide reads, in one-letter code: PPi-type phosphoenolpyruvate carboxykinase (1131 aa).

Belongs to the PPi-type phosphoenolpyruvate carboxykinase family. In terms of assembly, monomer and trimer; forms heterotrimers with PEPCK2 and PEPCK3.

The enzyme catalyses oxaloacetate + diphosphate = phosphoenolpyruvate + phosphate + CO2. Its function is as follows. Inorganic pyrophosphate (PPi)-dependent phosphoenolpyruvate carboxykinase, which regulates the carbon flow of the central metabolism by fixing CO(2) to phosphoenolpyruvate to produce oxaloacetate. Can also produce pyruvate and diphosphate from phosphoenolpyruvate and phosphate. The protein is PPi-type phosphoenolpyruvate carboxykinase of Propionibacterium freudenreichii subsp. freudenreichii.